The following is a 315-amino-acid chain: O-antigen chain rhamnosyltransferase WbaN (315 aa).

It belongs to the glycosyltransferase 2 family.

The catalysed reaction is alpha-D-galactosyl-di-trans,octa-cis-undecaprenyl diphosphate + dTDP-beta-L-rhamnose = alpha-L-rhamnosyl-(1-&gt;3)-alpha-D-galactosyl-1-diphospho-di-trans,octa-cis-undecaprenol + dTDP + H(+). Its pathway is bacterial outer membrane biogenesis; LPS O-antigen biosynthesis. Functionally, rhamnosyltransferase involved in the biosynthesis of the repeat unit of the lipopolysaccharide (LPS) O-antigen region. Catalyzes the addition of a rhamnose to the galactosyl-undecaprenyl diphosphate intermediate. The sequence is that of O-antigen chain rhamnosyltransferase WbaN from Salmonella anatum.